A 202-amino-acid chain; its full sequence is Imidazoleglycerol-phosphate dehydratase (202 aa).

The protein belongs to the imidazoleglycerol-phosphate dehydratase family.

The protein localises to the cytoplasm. It catalyses the reaction D-erythro-1-(imidazol-4-yl)glycerol 3-phosphate = 3-(imidazol-4-yl)-2-oxopropyl phosphate + H2O. Its pathway is amino-acid biosynthesis; L-histidine biosynthesis; L-histidine from 5-phospho-alpha-D-ribose 1-diphosphate: step 6/9. In Acinetobacter baylyi (strain ATCC 33305 / BD413 / ADP1), this protein is Imidazoleglycerol-phosphate dehydratase.